The primary structure comprises 591 residues: Dihydroxyacetone kinase 2 (591 aa).

The region spanning 8 to 344 (SDGNIVTPYL…FDYPTTASGW (337 aa)) is the DhaK domain. Residues 40–59 (ASAPNSGNPPKVSLVSGGGS) are disordered. Substrate-binding positions include 58 to 61 (GSGH), lysine 109, and aspartate 114. The active-site Tele-hemiaminal-histidine intermediate is histidine 223. Residues 384–587 (DTFAKILLAG…LAALLDGFVT (204 aa)) enclose the DhaL domain. ATP is bound by residues 413-416 (DGDC), 459-460 (TS), 511-512 (TL), and 572-574 (DPG).

This sequence belongs to the dihydroxyacetone kinase (DAK) family.

The enzyme catalyses dihydroxyacetone + ATP = dihydroxyacetone phosphate + ADP + H(+). It carries out the reaction D-glyceraldehyde + ATP = D-glyceraldehyde 3-phosphate + ADP + H(+). It functions in the pathway polyol metabolism; glycerol fermentation; glycerone phosphate from glycerol (oxidative route): step 2/2. Functionally, catalyzes both the phosphorylation of dihydroxyacetone and of glyceraldehyde. This Saccharomyces cerevisiae (strain ATCC 204508 / S288c) (Baker's yeast) protein is Dihydroxyacetone kinase 2 (DAK2).